Here is a 139-residue protein sequence, read N- to C-terminus: Peptide methionine sulfoxide reductase MsrB (139 aa).

Residues 8–130 (EREWQRELSP…NSASLQLKTD (123 aa)) enclose the MsrB domain. Zn(2+) is bound by residues C47, C50, C96, and C99. The Nucleophile role is filled by C119.

The protein belongs to the MsrB Met sulfoxide reductase family. Requires Zn(2+) as cofactor.

It catalyses the reaction L-methionyl-[protein] + [thioredoxin]-disulfide + H2O = L-methionyl-(R)-S-oxide-[protein] + [thioredoxin]-dithiol. The sequence is that of Peptide methionine sulfoxide reductase MsrB from Acinetobacter baylyi (strain ATCC 33305 / BD413 / ADP1).